The sequence spans 179 residues: Large ribosomal subunit protein uL6 (179 aa).

Belongs to the universal ribosomal protein uL6 family. Part of the 50S ribosomal subunit.

This protein binds to the 23S rRNA, and is important in its secondary structure. It is located near the subunit interface in the base of the L7/L12 stalk, and near the tRNA binding site of the peptidyltransferase center. The sequence is that of Large ribosomal subunit protein uL6 from Clostridium novyi (strain NT).